We begin with the raw amino-acid sequence, 179 residues long: Transmembrane protein 196 (179 aa).

A run of 4 helical transmembrane segments spans residues 11 to 31, 44 to 61, 67 to 87, and 100 to 120; these read LLVLSVLEIGLGVSSVAVGAV, LGDSSPFLLCGICGILCA, LVMILFSACCICGLIGGILNF, and LYPLHLASMSLACIGIGGCTL.

The protein resides in the cytoplasm. It localises to the membrane. Functionally, acts as a tumor suppressor in lung cancer. Inhibits tumor cell growth by inhibiting cell proliferation and migration and promoting cell apoptosis. Inhibits metastasis of lung cancer by suppressing beta-catenin expression in the Wnt/beta-catenin signaling pathway. The sequence is that of Transmembrane protein 196 (TMEM196) from Pongo abelii (Sumatran orangutan).